Reading from the N-terminus, the 806-residue chain is WEB family protein At3g02930, chloroplastic (806 aa).

The transit peptide at 1–78 directs the protein to the chloroplast; it reads MASKIKNGLS…PTPPEKTQIR (78 aa). Disordered regions lie at residues 1-94 and 380-403; these read MASK…QIKE and KSEQ…EKLK. Residues 9–22 show a composition bias toward low complexity; that stretch reads LSDTTLRKSSSTSL. The segment covering 34–59 has biased composition (polar residues); it reads PDSNSPSPTQQQSRLSFERPSSNSKP. Coiled coils occupy residues 88 to 530, 585 to 662, and 698 to 757; these read QSVQ…FESA, DCLK…IEEN, and ETLD…EDLN. The span at 391-403 shows a compositional bias: basic and acidic residues; sequence ESSKSEKEAEKLK. 2 disordered regions span residues 684–725 and 746–777; these read ENGY…EDET and KESA…EDEL. 2 stretches are compositionally biased toward basic and acidic residues: residues 685–699 and 706–725; these read NGYR…KVET and KLEE…EDET. Over residues 759-769 the composition is skewed to polar residues; that stretch reads VDQSQKTSPVN.

Belongs to the WEB family.

It localises to the plastid. The protein resides in the chloroplast. This is WEB family protein At3g02930, chloroplastic from Arabidopsis thaliana (Mouse-ear cress).